The primary structure comprises 527 residues: Laccase-5 (527 aa).

The N-terminal stretch at 1–23 is a signal peptide; that stretch reads MGKYHSFVNVVALSLSLSGRVFG. Positions 25–150 constitute a Plastocyanin-like 1 domain; sequence IGPVTDLTIS…DGLRGPLVVY (126 aa). N-linked (GlcNAc...) asparagine glycosylation is found at Asn-74 and Asn-77. Residues His-87, His-89, His-132, and His-134 each contribute to the Cu cation site. 2 disulfide bridges follow: Cys-108–Cys-516 and Cys-140–Cys-230. N-linked (GlcNAc...) asparagine glycosylation is found at Asn-156, Asn-209, Asn-233, Asn-242, Asn-276, Asn-317, Asn-358, Asn-366, Asn-393, and Asn-402. The Plastocyanin-like 2 domain occupies 162–306; it reads VDDDTTVITL…GGVNSAILRY (145 aa). Residues 373–498 form the Plastocyanin-like 3 domain; it reads TVPVLLQILS…AGFAIVWGED (126 aa). Residues His-425, His-428, His-430, His-480, Cys-481, His-482, and His-486 each coordinate Cu cation.

It belongs to the multicopper oxidase family. As to quaternary structure, homodimer. It depends on Cu cation as a cofactor.

The protein localises to the secreted. It carries out the reaction 4 hydroquinone + O2 = 4 benzosemiquinone + 2 H2O. Its function is as follows. Lignin degradation and detoxification of lignin-derived products. This chain is Laccase-5 (LCC5), found in Trametes villosa (White-rot fungus).